The sequence spans 112 residues: MEKDPKERREEEQAPVQNEEACPMGGGEGPKPRENVRGDWDPPAQDFREDMPNGLVNNIDIIDGDADDMERFMEEMRELRRKIRELQLRYSLRILIGDPPHHDHHDEFCLMP.

2 stretches are compositionally biased toward basic and acidic residues: residues 1–12 (MEKDPKERREEE) and 30–51 (PKPRENVRGDWDPPAQDFREDM). Residues 1-56 (MEKDPKERREEEQAPVQNEEACPMGGGEGPKPRENVRGDWDPPAQDFREDMPNGLV) are disordered. The segment at 101 to 105 (HHDHH) is his cluster. Cys-109 contributes to the Zn(2+) binding site.

It belongs to the BEX family. In terms of processing, ubiquitinated. Degraded by the proteasome.

The protein localises to the cytoplasm. The polypeptide is Protein BEX5 (BEX5) (Bos taurus (Bovine)).